We begin with the raw amino-acid sequence, 554 residues long: Valerianol synthase TPS1C (554 aa).

Asp-307 and Asp-311 together coordinate Mg(2+). Positions 326–330 (VQRWD) match the DDXXD motif motif. The Mg(2+) site is built by Asp-452, Ser-456, and Glu-460.

This sequence belongs to the terpene synthase family. Requires Mg(2+) as cofactor.

It carries out the reaction (2E,6E)-farnesyl diphosphate + H2O = valerianol + diphosphate. It functions in the pathway secondary metabolite biosynthesis; terpenoid biosynthesis. Terpene synthase that catalyzes the biosynthesis of the terpene valerianol, which is a volatile compound of floral scent. In Camellia hiemalis (Camellia), this protein is Valerianol synthase TPS1C.